A 436-amino-acid polypeptide reads, in one-letter code: uncharacterized protein (436 aa).

This is an uncharacterized protein from Treponema pallidum (strain Nichols).